A 1065-amino-acid polypeptide reads, in one-letter code: Leucine-rich repeats and immunoglobulin-like domains protein 2 (1065 aa).

A signal peptide spans 1 to 40 (MAPAPLGVPEEQLLGCRSRVLSRLLFIAQTALLLLPAAGA). Residues 41–75 (GLCPAPCSCRIPLLDCSRRKLPAPSWRALSGLLPP) enclose the LRRNT domain. Over 41–807 (GLCPAPCSCR…HEDDGWTTVG (767 aa)) the chain is Extracellular. LRR repeat units follow at residues 76–97 (DTAI…LESQ), 98–119 (TLQE…GEPT), 121–142 (NITL…ALQF), 145–166 (ALES…SFPR), 168–189 (QLKY…CFDN), 193–214 (SLLV…IFKL), 216–237 (HLQF…TFQG), 240–261 (SLRS…AFFG), 264–285 (NMEE…WLYG), 288–309 (MLQQ…AWEF), 312–333 (RLSE…AFVG), 336–357 (LLER…VFRF), 360–382 (NLQT…SEAF), 387–408 (SLTK…AFIG), and 411–432 (SLEH…AFSQ). N-linked (GlcNAc...) asparagine glycosylation occurs at Asn91. An N-linked (GlcNAc...) asparagine glycan is attached at Asn121. 2 N-linked (GlcNAc...) asparagine glycosylation sites follow: Asn173 and Asn189. Residue Asn274 is glycosylated (N-linked (GlcNAc...) asparagine). 5 N-linked (GlcNAc...) asparagine glycosylation sites follow: Asn441, Asn468, Asn514, Asn571, and Asn589. The LRRCT domain maps to 443–494 (SSLLCDCHLKWLLQWLVDNNFQHSVNVSCAHPEWLAGQSILNVDLKDFVCDD). 3 consecutive Ig-like C2-type domains span residues 498–597 (PQIR…AKLT), 602–691 (PSFL…ASLT), and 696–785 (PSFI…NVIS). Cys519 and Cys580 form a disulfide bridge. A disulfide bridge connects residues Cys623 and Cys675. Residues Asn687 and Asn728 are each glycosylated (N-linked (GlcNAc...) asparagine). Cys717 and Cys766 are oxidised to a cystine. The chain crosses the membrane as a helical span at residues 808-828 (IVIIVVVCCVVGTSLIWVIVI). Over 829–1065 (YHMRRKNEDY…RNIQDGSEGT (237 aa)) the chain is Cytoplasmic. Position 906 is a phosphotyrosine (Tyr906). 2 disordered regions span residues 963 to 990 (SANR…QMSG) and 1003 to 1040 (ELGL…ASSM). Over residues 974 to 983 (NHERISEKKL) the composition is skewed to basic and acidic residues. Polar residues predominate over residues 1013 to 1024 (QQPVHESPQLHQ).

In terms of tissue distribution, detected in all tissues analyzed.

It is found in the cell membrane. It localises to the cytoplasm. The polypeptide is Leucine-rich repeats and immunoglobulin-like domains protein 2 (LRIG2) (Homo sapiens (Human)).